The chain runs to 445 residues: Proline--tRNA ligase (445 aa).

It belongs to the class-II aminoacyl-tRNA synthetase family. ProS type 2 subfamily. In terms of assembly, homodimer.

Its subcellular location is the cytoplasm. It catalyses the reaction tRNA(Pro) + L-proline + ATP = L-prolyl-tRNA(Pro) + AMP + diphosphate. Functionally, catalyzes the attachment of proline to tRNA(Pro) in a two-step reaction: proline is first activated by ATP to form Pro-AMP and then transferred to the acceptor end of tRNA(Pro). This chain is Proline--tRNA ligase, found in Dinoroseobacter shibae (strain DSM 16493 / NCIMB 14021 / DFL 12).